We begin with the raw amino-acid sequence, 384 residues long: G protein-coupled receptor 88 (384 aa).

The Extracellular portion of the chain corresponds to 1-35 (MTNSSSTSTSTTTGGSLLLLCEEEESWAGRRIPVS). Asparagine 3 carries an N-linked (GlcNAc...) asparagine glycan. Residues 36–56 (LLYSGLAIGGTLANGMVIYLV) traverse the membrane as a helical segment. Over 57–73 (SSFRKLQTTSNAFIVNG) the chain is Cytoplasmic. A helical membrane pass occupies residues 74-94 (CAADLSVCALWMPQEAVLGLL). Residues 95–116 (PAGSAEPPGDWDSGGGSYRLLR) are Extracellular-facing. The helical transmembrane segment at 117-136 (GGLLGLGLTVSLLSHCLVAL) threads the bilayer. Over 137 to 158 (NRYLLITRAPATYQVLYQRRHT) the chain is Cytoplasmic. The chain crosses the membrane as a helical span at residues 159–179 (AGMLALSWALALGLVLLLPPW). At 180 to 195 (APKPGAEPPQVHYPAL) the chain is on the extracellular side. A helical transmembrane segment spans residues 196–216 (LAAGALLAQTALLLHCYLGIV). Over 217–285 (RRVRVSVKRV…RAQRRLSGLS (69 aa)) the chain is Cytoplasmic. A helical transmembrane segment spans residues 286-306 (VLLLCCVFLLATQPLVWVSLA). Topologically, residues 307–310 (SGFS) are extracellular. The helical transmembrane segment at 311–331 (LPVPWGVQAASWLLCCALSAL) threads the bilayer. Residues 332-384 (NPLLYTWRNEEFRRSVRSVLPGVGDAAAAAAAATAVPAMSQAQLGTRAAGQHW) are Cytoplasmic-facing.

Belongs to the G-protein coupled receptor 1 family. Expressed predominantly in the striatum. Expressed also in olfactory tubercle, nucleus accumbens, amygdala, and neocortex. Spinal cord, pons, and medulla expression remains discrete. Also expressed in peripheral tissues, including adrenal cortex (16 dpc to 21 dpc) and cochlear ganglia (19 dpc to P3) and also at moderate levels in retina (18 dpc to 19 dpc) and spleen (21 dpc to P7).

It is found in the cell membrane. Its subcellular location is the cell projection. The protein localises to the cilium membrane. The protein resides in the cytoplasm. It localises to the nucleus. Its function is as follows. Orphan G protein-coupled receptor implicated in a large repertoire of behavioral responses that engage motor activities, spatial learning, and emotional processing. May play a role in the regulation of cognitive and motor function. Couples with the heterotrimeric G protein complex of the G(i) subfamily, consisting of GNAI1, GNB1 and GNG2, thereby acting through a G(i)-mediated pathway. Plays a role in the attenuation of D1 dopamine receptor (D1R)-mediated cAMP response in ciliated cells. In non-ciliated cells, involved in the inhibition of the beta-2 adrenergic receptor (B2AR) response. This is G protein-coupled receptor 88 (Gpr88) from Rattus norvegicus (Rat).